The chain runs to 368 residues: Peptide chain release factor 2 (368 aa).

Gln250 is subject to N5-methylglutamine.

Belongs to the prokaryotic/mitochondrial release factor family. Methylated by PrmC. Methylation increases the termination efficiency of RF2.

The protein resides in the cytoplasm. Its function is as follows. Peptide chain release factor 2 directs the termination of translation in response to the peptide chain termination codons UGA and UAA. The chain is Peptide chain release factor 2 from Rickettsia africae (strain ESF-5).